The primary structure comprises 152 residues: Transcriptional regulator MraZ (152 aa).

SpoVT-AbrB domains lie at 5 to 52 (VTSI…PLHE) and 81 to 124 (ATEC…QDKQ).

It belongs to the MraZ family. As to quaternary structure, forms oligomers.

Its subcellular location is the cytoplasm. It is found in the nucleoid. This Actinobacillus pleuropneumoniae serotype 3 (strain JL03) protein is Transcriptional regulator MraZ.